A 229-amino-acid chain; its full sequence is uncharacterized protein (229 aa).

This sequence to M.pneumoniae MPN_376 central region.

This is an uncharacterized protein from Mycoplasma pneumoniae (strain ATCC 29342 / M129 / Subtype 1) (Mycoplasmoides pneumoniae).